Here is a 390-residue protein sequence, read N- to C-terminus: MPYDKKAVHFGGGNIGRGFVAEFLHNSGYEVVFVDVMDSIIEALQKQSSYTVTEIGDDGEREFTIDHYRALNSKHEMDKVVQEIASADVVTCAVGPNILKFVAEPVAKAIDARTLDYPIAVIACENAINATTTWRGFIEGKLSEDSKSNLDKKARFANSAIDRIVPVQDKDAGLNVKIEKFYEWCVEQKPFENGGKKPDVKGIHYVDDLEPYIERKLFTVNTSHATAAYYGHQAKKQYIHEVLQDKKLHDIVRDAVKETAHLIVSKHGVSVQEQNDYVDSIIKRISNPVLKDNVERVGRAPLRKLSRKERFVGPAAQLAERGEKVDALLGAIEQAYLFQNVEGDEESAELAKILKENSAEEVVTKVNGLDKSHPLFEKILPIVKKVQGGS.

NAD(+) is bound at residue 7–18 (AVHFGGGNIGRG). Lys216 is a catalytic residue.

The protein belongs to the mannitol dehydrogenase family. In terms of assembly, monomer.

The enzyme catalyses D-mannitol 1-phosphate + NAD(+) = beta-D-fructose 6-phosphate + NADH + H(+). Functionally, catalyzes the NAD(H)-dependent interconversion of D-fructose 6-phosphate and D-mannitol 1-phosphate in the mannitol metabolic pathway. Required for the process of sporulation on senescing leaf material. The sequence is that of Mannitol-1-phosphate 5-dehydrogenase (mpd1) from Phaeosphaeria nodorum (strain SN15 / ATCC MYA-4574 / FGSC 10173) (Glume blotch fungus).